The primary structure comprises 955 residues: Thyroid hormone receptor-associated protein 3 (955 aa).

The interval 1-94 (MSKTNKSKSG…YFRGRNRGFY (94 aa)) is disordered. N-acetylserine is present on Ser-2. The tract at residues 2 to 190 (SKTNKSKSGS…KSSSKDSRPS (189 aa)) is required for mRNA splicing activation. Residues 14–51 (SRSRSASRSRSRSFSKSRSRSRSLSRSRKRRLSSRSRS) are compositionally biased toward basic residues. Dimethylated arginine is present on Arg-17. The span at 58-75 (HNRERNHPRVYQNRDFRG) shows a compositional bias: basic and acidic residues. Arg-66 is subject to Asymmetric dimethylarginine. The span at 82-94 (RPYYFRGRNRGFY) shows a compositional bias: low complexity. Asymmetric dimethylarginine is present on residues Arg-101 and Arg-108. The disordered stretch occupies residues 117–559 (AYSPRRGRSR…AKGDFPTGKS (443 aa)). The span at 121 to 143 (RRGRSRSRSPKRRSPSPRSRSHS) shows a compositional bias: basic residues. A compositionally biased stretch (basic and acidic residues) spans 144 to 155 (RNSDKSSSDRSR). Residues 157-166 (SSSSRSSSNH) show a composition bias toward low complexity. The span at 167-188 (SRVESSKRKSAKEKKSSSKDSR) shows a compositional bias: basic and acidic residues. Residue Lys-202 forms a Glycyl lysine isopeptide (Lys-Gly) (interchain with G-Cter in SUMO1); alternate linkage. Lys-202 participates in a covalent cross-link: Glycyl lysine isopeptide (Lys-Gly) (interchain with G-Cter in SUMO2); alternate. Positions 204–220 (QTFSGGTSQDTKASESS) are enriched in polar residues. Lys-215 is covalently cross-linked (Glycyl lysine isopeptide (Lys-Gly) (interchain with G-Cter in SUMO2)). A Phosphoserine modification is found at Ser-220. Lys-221 participates in a covalent cross-link: Glycyl lysine isopeptide (Lys-Gly) (interchain with G-Cter in SUMO2); alternate. Lys-221 carries the N6-acetyllysine; alternate modification. Ser-232, Ser-237, Ser-240, Ser-243, and Ser-248 each carry phosphoserine. Residue Lys-252 forms a Glycyl lysine isopeptide (Lys-Gly) (interchain with G-Cter in SUMO2); alternate linkage. Residue Lys-252 is modified to N6-methyllysine; alternate. Phosphoserine is present on residues Ser-253 and Ser-257. Residues 266-276 (RPSPVPKPSPP) show a composition bias toward pro residues. Residues 282–300 (QMGSTLPSGAGYQSGTHQG) are compositionally biased toward polar residues. Over residues 305–331 (GSGSLSPSKKSPVGKSPPSTGSTYGSS) the composition is skewed to low complexity. Residues Ser-315, Ser-320, and Ser-323 each carry the phosphoserine modification. Thr-324 is modified (phosphothreonine). Ser-326 carries the phosphoserine modification. At Tyr-328 the chain carries Phosphotyrosine. Residue Lys-333 forms a Glycyl lysine isopeptide (Lys-Gly) (interchain with G-Cter in SUMO2) linkage. Ser-339 bears the Phosphoserine mark. Lys-346 is covalently cross-linked (Glycyl lysine isopeptide (Lys-Gly) (interchain with G-Cter in SUMO2); alternate). Lys-346 carries the N6-acetyllysine; alternate modification. Residues 347–377 (RYLEEQKTENGKDKEQKQTNTDKEKIKEKGS) show a composition bias toward basic and acidic residues. Glycyl lysine isopeptide (Lys-Gly) (interchain with G-Cter in SUMO2) cross-links involve residues Lys-353 and Lys-375. Positions 359–955 (DKEQKQTNTD…EKDNIQPTTE (597 aa)) are required for mRNA decay activity. Residues Ser-377 and Ser-379 each carry the phosphoserine modification. Lys-387 is covalently cross-linked (Glycyl lysine isopeptide (Lys-Gly) (interchain with G-Cter in SUMO1); alternate). Lys-387 is covalently cross-linked (Glycyl lysine isopeptide (Lys-Gly) (interchain with G-Cter in SUMO2); alternate). Glycyl lysine isopeptide (Lys-Gly) (interchain with G-Cter in SUMO2) cross-links involve residues Lys-389 and Lys-396. Thr-397 bears the Phosphothreonine mark. Residue Lys-401 forms a Glycyl lysine isopeptide (Lys-Gly) (interchain with G-Cter in SUMO2) linkage. Phosphoserine occurs at positions 406 and 408. The segment covering 414–452 (LRDDFEKKMADFHKEEMDDQDKDKAKGRKESEFDDEPKF) has biased composition (basic and acidic residues). Residues Lys-421 and Lys-427 each participate in a glycyl lysine isopeptide (Lys-Gly) (interchain with G-Cter in SUMO2) cross-link. Ser-444 carries the phosphoserine modification. Lys-451 is covalently cross-linked (Glycyl lysine isopeptide (Lys-Gly) (interchain with G-Cter in SUMO1); alternate). Residues Lys-451 and Lys-455 each participate in a glycyl lysine isopeptide (Lys-Gly) (interchain with G-Cter in SUMO2); alternate cross-link. Lys-455 is modified (N6-acetyllysine; alternate). Residues Lys-461 and Lys-467 each participate in a glycyl lysine isopeptide (Lys-Gly) (interchain with G-Cter in SUMO2) cross-link. Phosphoserine is present on Ser-468. Residues Lys-470 and Lys-481 each participate in a glycyl lysine isopeptide (Lys-Gly) (interchain with G-Cter in SUMO2); alternate cross-link. An N6-acetyllysine; alternate mark is found at Lys-470 and Lys-481. Residue Lys-486 forms a Glycyl lysine isopeptide (Lys-Gly) (interchain with G-Cter in SUMO2) linkage. The span at 495 to 521 (FPERSKKEDRGKRSEGGHRGFVPEKNF) shows a compositional bias: basic and acidic residues. An N6-acetyllysine modification is found at Lys-519. Lys-527 participates in a covalent cross-link: Glycyl lysine isopeptide (Lys-Gly) (interchain with G-Cter in SUMO2); alternate. Lys-527 carries the post-translational modification N6-acetyllysine; alternate. A Phosphoserine modification is found at Ser-535. Residues 540–550 (KTSESRDKLGA) show a composition bias toward basic and acidic residues. Residue Lys-551 forms a Glycyl lysine isopeptide (Lys-Gly) (interchain with G-Cter in SUMO2) linkage. 552–559 (GDFPTGKS) provides a ligand contact to ATP. A Glycyl lysine isopeptide (Lys-Gly) (interchain with G-Cter in SUMO2); alternate cross-link involves residue Lys-558. N6-acetyllysine; alternate is present on Lys-558. Phosphoserine occurs at positions 560, 562, and 575. Lys-602 is covalently cross-linked (Glycyl lysine isopeptide (Lys-Gly) (interchain with G-Cter in SUMO2)). 5 positions are modified to phosphoserine: Ser-619, Ser-622, Ser-672, Ser-682, and Ser-684. Residues 663-680 (EQEAAKNKKSPEIHRRID) are compositionally biased toward basic and acidic residues. Residues 663–955 (EQEAAKNKKS…EKDNIQPTTE (293 aa)) are disordered. Residues 691–761 (LAHDEMKSPR…RSAEKTEKTH (71 aa)) show a composition bias toward basic and acidic residues. Lys-697 participates in a covalent cross-link: Glycyl lysine isopeptide (Lys-Gly) (interchain with G-Cter in SUMO2). Phosphoserine is present on Ser-698. Residues Lys-705, Lys-709, Lys-711, Lys-756, and Lys-759 each participate in a glycyl lysine isopeptide (Lys-Gly) (interchain with G-Cter in SUMO2) cross-link. Basic residues predominate over residues 762–775 (KGSKKQKKHRRARD). Over residues 779–789 (SSSSSSQSSHS) the composition is skewed to low complexity. Residue Lys-811 is modified to N6-acetyllysine. The residue at position 845 (Arg-845) is an Asymmetric dimethylarginine. Positions 848-859 (YSGNNNNNSNND) are enriched in low complexity. Residue Thr-874 is modified to Phosphothreonine. Residues Lys-876 and Lys-879 each participate in a glycyl lysine isopeptide (Lys-Gly) (interchain with G-Cter in SUMO2) cross-link. Basic and acidic residues predominate over residues 881–895 (YLHDDREGEGSDKWV). Ser-928 and Ser-939 each carry phosphoserine. The segment covering 930 to 940 (EEGEIEDDESG) has biased composition (acidic residues).

It belongs to the BCLAF1/THRAP3 family. In terms of assembly, associated with the large multiprotein complex TRAP (Mediator complex-like). Interacts with SFPQ; the interaction is dependent on SFPQ phosphorylation at 'Thr-687' and inhibits binding of SFPQ to an ESS1 exonic splicing silencer element-containing RNA. Interacts with NXF1. Component of the SNARP complex which consists at least of SNIP1, SNW1, THRAP3, BCLAF1 and PNN. Associated with spliced mRNP complexes. Interacts with HELZ2 and PPARG. Interacts with CLOCK and BMAL1. Component of a MACOM-like complex, named WTAP complex, composed of WTAP, ZC3H13, CBLL1, KIAA1429, RBM15, BCLAF1 and THRAP3. ADP-ribosylation during genotoxic stress promotes accumulation in nuclear speckles. Ubiquitous.

It is found in the nucleus. Its subcellular location is the nucleoplasm. The protein resides in the nucleus speckle. In terms of biological role, involved in pre-mRNA splicing. Remains associated with spliced mRNA after splicing which probably involves interactions with the exon junction complex (EJC). Can trigger mRNA decay which seems to be independent of nonsense-mediated decay involving premature stop codons (PTC) recognition. May be involved in nuclear mRNA decay. Involved in regulation of signal-induced alternative splicing. During splicing of PTPRC/CD45 is proposed to sequester phosphorylated SFPQ from PTPRC/CD45 pre-mRNA in resting T-cells. Involved in cyclin-D1/CCND1 mRNA stability probably by acting as component of the SNARP complex which associates with both the 3'end of the CCND1 gene and its mRNA. Involved in response to DNA damage. Is excluced from DNA damage sites in a manner that parallels transcription inhibition; the function may involve the SNARP complex. Initially thought to play a role in transcriptional coactivation through its association with the TRAP complex; however, it is not regarded as a stable Mediator complex subunit. Cooperatively with HELZ2, enhances the transcriptional activation mediated by PPARG, maybe through the stabilization of the PPARG binding to DNA in presence of ligand. May play a role in the terminal stage of adipocyte differentiation. Plays a role in the positive regulation of the circadian clock. Acts as a coactivator of the CLOCK-BMAL1 heterodimer and promotes its transcriptional activator activity and binding to circadian target genes. In Homo sapiens (Human), this protein is Thyroid hormone receptor-associated protein 3.